A 474-amino-acid chain; its full sequence is ATP-dependent rRNA helicase RRP3 (474 aa).

A compositionally biased stretch (basic residues) spans 1 to 10 (MPSMKRRKLS). A disordered region spans residues 1 to 43 (MPSMKRRKLSHTPPQGEAEDGFSDSETSQASLQETPGNDEKIE). The segment covering 24–36 (DSETSQASLQETP) has biased composition (polar residues). The Q motif motif lies at 48-76 (KSFKDLGIIDSLCEACDSLGYKAPTQIQA). One can recognise a Helicase ATP-binding domain in the interval 79 to 250 (IPLALQGRDL…RASLSNPLRV (172 aa)). 92 to 99 (AETGSGKT) contributes to the ATP binding site. The short motif at 198–201 (DEAD) is the DEAD box element. Residues 278–422 (YLIYLLNEFP…EYKVEKEEVM (145 aa)) form the Helicase C-terminal domain. The tract at residues 442–474 (LHENRGKKGATLRNRRIGKGAKRSRDEMDREEG) is disordered. The span at 448–463 (KKGATLRNRRIGKGAK) shows a compositional bias: basic residues. Basic and acidic residues predominate over residues 464–474 (RSRDEMDREEG).

The protein belongs to the DEAD box helicase family. DDX47/RRP3 subfamily. In terms of assembly, interacts with the SSU processome.

It localises to the nucleus. It catalyses the reaction ATP + H2O = ADP + phosphate + H(+). In terms of biological role, ATP-dependent rRNA helicase required for pre-ribosomal RNA processing. Involved in the maturation of the 35S-pre-rRNA and to its cleavage to mature 18S rRNA. The chain is ATP-dependent rRNA helicase RRP3 from Coccidioides immitis (strain RS) (Valley fever fungus).